The sequence spans 793 residues: MNNKQEEIDQFLSSTSTSPSPSSSSSPSNNDSTSLKSMISGIENLNVHSKGNDNKNNNNNNNNNNSNNNEKQKDIVSLENNSSSNNTTTTTTTTTTSNHNSNNNSNNNNNNINNNNINNNNYEPLVNGHNNGFGDKLNDQPSPSSHRVSDFSDEYSPSKVRILVADDDDVQRKILNNLLKKFHYNVTLVPNGEIAWEYINKGQQKYDLVLTDVMMPHITGFDLLQRINDHPVHRHIPVILMSGTAVDYKYANDTIKIGGQDFLTKPIAKELLKKKIDTVLQSIWQRRKEEEYKATLAQEREKGNKLAKEMELKEHEIEELTKKVSKMSSISKEAMESPLVSVTRNIEELLKQSSWSHYESEIKEKLSSILKELGSSNIYRPSFEKLIKNDSVDPVTKSFLVSEFSSTTSRRNSIPTFPQTTYNRDTKEVIKGWEFDVFKYSEDDLMPLLVDMFENFQLPEIFKIPIEKLQRFIMTVNALYRKNNRYHNFTHAFDVTQTVYTFLTSFNAAQYLTHLDIFALLISCMCHDLNHPGFNNTFQVNAQTELSLEYNDISVLENHHAMLTFKILRNSECNILEGLNEDQYKELRRSVVQLILATDMQNHFEHTNKFQHHLNNLPFDRNKKEDRQMILNFLIKCGDISNIARPWHLNFEWSLRVSDEFFQQSHYETICGYPVTPFMDKTKTTRARIAADFIDFVASPLFQSMAKFLKESQFLLKVISKNRENWQAYMELQKEGKCNDDDLQFMEDPTILVKSKLPKIDEEENRDKVSSSSSSSTAPLTSTSSSNNETSSS.

The disordered stretch occupies residues 1-153 (MNNKQEEIDQ…SSHRVSDFSD (153 aa)). Low complexity-rich tracts occupy residues 13 to 34 (SSTS…DSTS), 54 to 69 (NKNN…SNNN), and 80 to 121 (NNSS…NNNN). The region spanning 161-280 (RILVADDDDV…LLKKKIDTVL (120 aa)) is the Response regulatory domain. Asp212 is modified (4-aspartylphosphate). The PDEase domain occupies 410-733 (RRNSIPTFPQ…ENWQAYMELQ (324 aa)). His487 (proton donor) is an active-site residue. A divalent metal cation contacts are provided by His491, His527, Asp528, and Asp639. A disordered region spans residues 756-793 (KLPKIDEEENRDKVSSSSSSSTAPLTSTSSSNNETSSS). A compositionally biased stretch (low complexity) spans 770-793 (SSSSSSSTAPLTSTSSSNNETSSS).

This sequence belongs to the cyclic nucleotide phosphodiesterase family. Requires a divalent metal cation as cofactor. In terms of processing, the phosphorelay mechanism involves the sequential transfer of a phosphate group from Asp-212 of pde2 to 'His-65' of rdeA. Phosphorylation of Asp-212 activates the phosphodiesterase domain.

Its subcellular location is the cytoplasm. It is found in the cytosol. The catalysed reaction is 3',5'-cyclic AMP + H2O = AMP + H(+). With respect to regulation, inhibited by 3-isobutyl-1-methylxanthine (IBMX). Its function is as follows. Phosphodiesterase specific for cAMP. Involved in the degradation of intracellular cAMP. Morphological suppressor of tagB. Phosphorelay protein that accepts phosphate from rdeA or supplies phosphate from regA; depending on the relative concentration of the phosphodonor proteins. This Dictyostelium discoideum (Social amoeba) protein is 3',5'-cyclic-nucleotide phosphodiesterase regA (regA).